We begin with the raw amino-acid sequence, 530 residues long: Cation transporter HKT2;2 (530 aa).

At 1–40 (MTSIYQEFIHTKCQSFRSIGRYVLHSIVLIYRFVSLHVHP) the chain is on the cytoplasmic side. Transmembrane regions (helical) follow at residues 41–61 (FWIQ…LLMF) and 102–122 (IVVL…FLGL). Over 123 to 186 (MLRLKHKHNP…DLKRSKRLRW (64 aa)) the chain is Cytoplasmic. A run of 2 helical transmembrane segments spans residues 187 to 207 (FLGF…FLLV) and 260 to 280 (GLLL…PLFL). The Cytoplasmic segment spans residues 281–317 (RILIWFLGKVTKLKDLKLMIKNSDELQYDYLLPKLPT). 2 consecutive transmembrane segments (helical) span residues 318–338 (AFLA…FGSV) and 372–392 (IDCS…MYLP). Over 393-420 (PSTTFALSNGDEKTANKKAKRKLGLVVR) the chain is Cytoplasmic. 2 consecutive transmembrane segments (helical) span residues 421-441 (NLAF…LITE) and 494-514 (SLSG…MLYG). The Cytoplasmic segment spans residues 515–530 (RLKAFTKGTGEYWRLW).

The protein belongs to the TrkH potassium transport family. HKT (TC 2.A.38.3) subfamily.

It localises to the membrane. Functionally, seems to be involved in regulation of potassium-sodium homeostasis. Seems to act as a potassium-sodium cotransporter, which mediates increased potassium uptake under external sodium accumulation and contributes to salt-tolerance in cultivar indica Pokkali. The chain is Cation transporter HKT2;2 from Oryza sativa subsp. indica (Rice).